We begin with the raw amino-acid sequence, 658 residues long: Glycogen debranching enzyme (658 aa).

The active-site Nucleophile is the D336. The Proton donor role is filled by E371. The interval 460–484 (ANGEENRDGSNNNHSNNHGKEGLGG) is disordered.

The protein belongs to the glycosyl hydrolase 13 family.

The enzyme catalyses Hydrolysis of (1-&gt;6)-alpha-D-glucosidic linkages to branches with degrees of polymerization of three or four glucose residues in limit dextrin.. Its pathway is glycan degradation; glycogen degradation. Functionally, removes maltotriose and maltotetraose chains that are attached by 1,6-alpha-linkage to the limit dextrin main chain, generating a debranched limit dextrin. The protein is Glycogen debranching enzyme of Escherichia fergusonii (strain ATCC 35469 / DSM 13698 / CCUG 18766 / IAM 14443 / JCM 21226 / LMG 7866 / NBRC 102419 / NCTC 12128 / CDC 0568-73).